A 43-amino-acid polypeptide reads, in one-letter code: Protein PsbN (43 aa).

The chain crosses the membrane as a helical span at residues 5–27 (TFLSIFISAALLGITGYSIYTAF).

Belongs to the PsbN family.

It is found in the plastid. Its subcellular location is the cyanelle thylakoid membrane. Its function is as follows. May play a role in photosystem I and II biogenesis. This is Protein PsbN from Cyanophora paradoxa.